We begin with the raw amino-acid sequence, 34 residues long: Beta/mu-theraphotoxin-Pe1a (34 aa).

Intrachain disulfides connect Cys2–Cys16, Cys9–Cys21, and Cys15–Cys28.

It belongs to the neurotoxin 10 (Hwtx-1) family. 54 (ProTx-1) subfamily. In terms of tissue distribution, expressed by the venom gland.

Its subcellular location is the secreted. Ion channel impairing toxin that inhibits voltage-gated sodium channels. The recombinantly expressed toxin shows a weak activity against Nav1.7/SCN9A (25% inhibition at 10 uM), and shifts the voltage dependence of channel activation to more depolarized potentials. The sequence is that of Beta/mu-theraphotoxin-Pe1a from Phormingochilus everetti (Malaysian purple earth tiger tarantula).